Consider the following 64-residue polypeptide: UPF0434 protein BOV_A0835 (64 aa).

Belongs to the UPF0434 family.

The chain is UPF0434 protein BOV_A0835 from Brucella ovis (strain ATCC 25840 / 63/290 / NCTC 10512).